The following is a 245-amino-acid chain: 5-oxoprolinase subunit A (245 aa).

Belongs to the LamB/PxpA family. As to quaternary structure, forms a complex composed of PxpA, PxpB and PxpC.

The catalysed reaction is 5-oxo-L-proline + ATP + 2 H2O = L-glutamate + ADP + phosphate + H(+). Its function is as follows. Catalyzes the cleavage of 5-oxoproline to form L-glutamate coupled to the hydrolysis of ATP to ADP and inorganic phosphate. The sequence is that of 5-oxoprolinase subunit A from Serratia proteamaculans (strain 568).